The sequence spans 484 residues: Palmitoyltransferase ZDHHC1 (484 aa).

Polar residues-rich tracts occupy residues 1-11 (MNICNKPSNKT) and 19-34 (TAPS…LQGQ). The disordered stretch occupies residues 1–38 (MNICNKPSNKTAPEKSVWTAPSQDSGPSPELQGQRSRR). Topologically, residues 1 to 49 (MNICNKPSNKTAPEKSVWTAPSQDSGPSPELQGQRSRRNGWSWPPHPLQ) are cytoplasmic. The tract at residues 1–268 (MNICNKPSNK…GHLLCFHIYL (268 aa)) is mediates interaction with STING1. Residues 50–70 (IVAWLLYLFFAVIGFGVLVPL) traverse the membrane as a helical segment. The Lumenal segment spans residues 71–74 (LPHH). A helical membrane pass occupies residues 75 to 95 (WVPAGYACMGAIFAGHLVVHL). Residues 96 to 182 (TAVSIDPADA…YRLFLHSVAS (87 aa)) lie on the Cytoplasmic side of the membrane. The region spanning 131-181 (LHCNLCDVDVSARSKHCSACNKCVCGFDHHCKWLNNCVGERNYRLFLHSVA) is the DHHC domain. Catalysis depends on Cys-161, which acts as the S-palmitoyl cysteine intermediate. The helical transmembrane segment at 183 to 203 (ALLGVLLLVLVATYVFVEFFV) threads the bilayer. Residues 204–238 (NPMRLRTNQHFEVLKNHTDVWFVFLPAAPVETQAP) are Lumenal-facing. Residues 239–259 (AILALAALLILLGLLSTALLG) form a helical membrane-spanning segment. Residues 260 to 484 (HLLCFHIYLM…GTPGGGDGLP (225 aa)) lie on the Cytoplasmic side of the membrane. Disordered stretches follow at residues 341–415 (TQGQ…VHAG) and 444–484 (LGAP…DGLP). Over residues 364–374 (PQKKRKRRVYR) the composition is skewed to basic residues. Basic and acidic residues predominate over residues 380–392 (VLDRELPLPRLRE). A compositionally biased stretch (low complexity) spans 395–415 (TPSRRSSSSSDSTSASPVHAG). The span at 475-484 (GTPGGGDGLP) shows a compositional bias: gly residues.

It belongs to the DHHC palmitoyltransferase family. As to quaternary structure, interacts with STING1; ZDHHC1 constitutively interacts with STING1 and in presence of DNA viruses activates it by promoting its cGAMP-induced oligomerization and the recruitment of downstream signaling components. Expressed at high levels in fetal lung and heart. Expressed at lower levels in fetal liver and brain. Also detected in adult islet cells of pancreas, Leydig cells of testis, retina and molecular layer of cerebellum.

It localises to the endosome membrane. Its subcellular location is the endoplasmic reticulum membrane. It is found in the golgi apparatus. The catalysed reaction is L-cysteinyl-[protein] + hexadecanoyl-CoA = S-hexadecanoyl-L-cysteinyl-[protein] + CoA. In terms of biological role, palmitoyltransferase that catalyzes the addition of palmitate onto various protein substrates, such as NCDN and NLRP3. Has a palmitoyltransferase activity toward NCDN and regulates NCDN association with endosome membranes through this palmitoylation. Acts as an activator of the NLRP3 inflammasome by mediating palmitoylation of 'Cys-130' and 'Cys-958' of NLRP3, thereby promoting NLRP3 phosphorylation and activation by NEK7. Functionally, also has a palmitoyltransferase activity-independent function in DNA virus-triggered and CGAS-mediated innate immune response. Functions as an activator of STING1 by promoting its cGAMP-induced oligomerization and the recruitment of downstream signaling components. This is Palmitoyltransferase ZDHHC1 from Mus musculus (Mouse).